We begin with the raw amino-acid sequence, 79 residues long: MAAPSMKERQACWGARDLYWRCLDDNAEDAARCQKLRSSFEASCPQQWIKYFDKRRDYLKFKEKFEAGGFQSSQSTENS.

The CHCH domain occupies 9-52 (RQACWGARDLYWRCLDDNAEDAARCQKLRSSFEASCPQQWIKYF). A Cx9C motif motif is present at residues 12–22 (CWGARDLYWRC). 2 disulfides stabilise this stretch: C12–C44 and C22–C33. The short motif at 33–44 (CQKLRSSFEASC) is the Cx10C motif element.

Belongs to the cytochrome c oxidase subunit 6B family. As to quaternary structure, found in a complex with TMEM177, COX20, MT-CO2/COX2, COX18, SCO1 and SCO2. Interacts with COA1, MT-CO2/COX2, SCO1, SCO2 and COX20. Interacts with COX20 in a MT-CO2/COX2- and COX18-dependent manner. Interacts with COX16.

Its subcellular location is the mitochondrion. The protein localises to the mitochondrion intermembrane space. Functionally, involved in the maturation of the mitochondrial respiratory chain complex IV subunit MT-CO2/COX2. Thereby, may regulate early steps of complex IV assembly. Mitochondrial respiratory chain complex IV or cytochrome c oxidase is the component of the respiratory chain that catalyzes the transfer of electrons from intermembrane space cytochrome c to molecular oxygen in the matrix and as a consequence contributes to the proton gradient involved in mitochondrial ATP synthesis. May also be required for efficient formation of respiratory supercomplexes comprised of complexes III and IV. This chain is Cytochrome c oxidase assembly factor 6 homolog (Coa6), found in Mus musculus (Mouse).